Reading from the N-terminus, the 83-residue chain is Antitoxin ChpS (83 aa).

Residues 3-48 (ITIKRWGNSAGMVIPNIVMKELNLQPGQSVEAQVSNNQLILTPISR) form the SpoVT-AbrB domain.

Belongs to the PemI family. In terms of assembly, interacts with ChpB, inhibiting its endoribonuclease activity.

Its function is as follows. Antitoxin component of a type II toxin-antitoxin (TA) system. May be involved in the regulation of cell growth. It acts as a suppressor of the endoribonuclease (inhibitory function) of ChpB protein. Both ChpS and ChpB probably bind to the promoter region of the chpS-chpB operon to autoregulate their synthesis. The chain is Antitoxin ChpS (chpS) from Escherichia coli (strain K12).